A 209-amino-acid chain; its full sequence is Casparian strip membrane protein 1 (209 aa).

The interval 1–35 (MKTGESTAIDIAPETNNSGPIGKKKSTTPLLAAPV) is disordered. Over 1 to 46 (MKTGESTAIDIAPETNNSGPIGKKKSTTPLLAAPVPDRGTHRMKRG) the chain is Cytoplasmic. A helical membrane pass occupies residues 47–67 (LAIFDFVLRIGVLASALAAAA). Over 68-96 (AMGTSEQTLPFFTQFFQFEASYDDLPTFQ) the chain is Extracellular. A helical membrane pass occupies residues 97-117 (FFVVAMAVVAGYVVLSIPFSI). Residues 118-129 (VCIIRPHAAGPR) lie on the Cytoplasmic side of the membrane. The chain crosses the membrane as a helical span at residues 130-150 (VLLLILDSVALTLNTAAAGAA). The Extracellular portion of the chain corresponds to 151–182 (AAVVSLAHSGNSSTNWLAICNQFGDFCQQASG). Asn161 is a glycosylation site (N-linked (GlcNAc...) asparagine). Residues 183–203 (AVVGSFAAVLLFLLLILFSAL) traverse the membrane as a helical segment. Residues 204–209 (SLKNSH) lie on the Cytoplasmic side of the membrane.

The protein belongs to the Casparian strip membrane proteins (CASP) family. As to quaternary structure, homodimer and heterodimers.

Its subcellular location is the cell membrane. Regulates membrane-cell wall junctions and localized cell wall deposition. Required for establishment of the Casparian strip membrane domain (CSD) and the subsequent formation of Casparian strips, a cell wall modification of the root endodermis that determines an apoplastic barrier between the intraorganismal apoplasm and the extraorganismal apoplasm and prevents lateral diffusion. This Cucumis melo (Muskmelon) protein is Casparian strip membrane protein 1.